Consider the following 391-residue polypeptide: Tryptophan synthase beta chain (391 aa).

Lys-84 is modified (N6-(pyridoxal phosphate)lysine).

This sequence belongs to the TrpB family. As to quaternary structure, tetramer of two alpha and two beta chains. Pyridoxal 5'-phosphate is required as a cofactor.

It carries out the reaction (1S,2R)-1-C-(indol-3-yl)glycerol 3-phosphate + L-serine = D-glyceraldehyde 3-phosphate + L-tryptophan + H2O. It functions in the pathway amino-acid biosynthesis; L-tryptophan biosynthesis; L-tryptophan from chorismate: step 5/5. Functionally, the beta subunit is responsible for the synthesis of L-tryptophan from indole and L-serine. The chain is Tryptophan synthase beta chain from Caldanaerobacter subterraneus subsp. tengcongensis (strain DSM 15242 / JCM 11007 / NBRC 100824 / MB4) (Thermoanaerobacter tengcongensis).